The chain runs to 425 residues: UDP-N-acetylglucosamine 1-carboxyvinyltransferase (425 aa).

25–26 (KN) contributes to the phosphoenolpyruvate binding site. Position 95 (Arg-95) interacts with UDP-N-acetyl-alpha-D-glucosamine. Cys-119 functions as the Proton donor in the catalytic mechanism. Cys-119 carries the post-translational modification 2-(S-cysteinyl)pyruvic acid O-phosphothioketal. Residues 124 to 128 (RPVDQ), Asp-306, and Ile-328 contribute to the UDP-N-acetyl-alpha-D-glucosamine site.

It belongs to the EPSP synthase family. MurA subfamily.

The protein resides in the cytoplasm. The catalysed reaction is phosphoenolpyruvate + UDP-N-acetyl-alpha-D-glucosamine = UDP-N-acetyl-3-O-(1-carboxyvinyl)-alpha-D-glucosamine + phosphate. The protein operates within cell wall biogenesis; peptidoglycan biosynthesis. Its function is as follows. Cell wall formation. Adds enolpyruvyl to UDP-N-acetylglucosamine. The protein is UDP-N-acetylglucosamine 1-carboxyvinyltransferase of Thermus thermophilus (strain ATCC 27634 / DSM 579 / HB8).